An 88-amino-acid chain; its full sequence is Small ribosomal subunit protein uS15 (88 aa).

It belongs to the universal ribosomal protein uS15 family. Part of the 30S ribosomal subunit. Forms a bridge to the 50S subunit in the 70S ribosome, contacting the 23S rRNA.

In terms of biological role, one of the primary rRNA binding proteins, it binds directly to 16S rRNA where it helps nucleate assembly of the platform of the 30S subunit by binding and bridging several RNA helices of the 16S rRNA. Its function is as follows. Forms an intersubunit bridge (bridge B4) with the 23S rRNA of the 50S subunit in the ribosome. The chain is Small ribosomal subunit protein uS15 from Mycoplasmopsis agalactiae (strain NCTC 10123 / CIP 59.7 / PG2) (Mycoplasma agalactiae).